A 68-amino-acid polypeptide reads, in one-letter code: Large ribosomal subunit protein bL32 (68 aa).

A disordered region spans residues 1 to 20 (MAVQQNKVSKSRRNNRRAHD).

This sequence belongs to the bacterial ribosomal protein bL32 family.

The sequence is that of Large ribosomal subunit protein bL32 from Ruegeria sp. (strain TM1040) (Silicibacter sp.).